A 211-amino-acid polypeptide reads, in one-letter code: Large ribosomal subunit protein uL3 (211 aa).

At glutamine 150 the chain carries N5-methylglutamine.

Belongs to the universal ribosomal protein uL3 family. As to quaternary structure, part of the 50S ribosomal subunit. Forms a cluster with proteins L14 and L19. In terms of processing, methylated by PrmB.

Functionally, one of the primary rRNA binding proteins, it binds directly near the 3'-end of the 23S rRNA, where it nucleates assembly of the 50S subunit. In Pseudomonas syringae pv. syringae (strain B728a), this protein is Large ribosomal subunit protein uL3.